We begin with the raw amino-acid sequence, 312 residues long: Holliday junction branch migration complex subunit RuvB (312 aa).

The segment at 1-168 (MKTNNEFRPQ…FGHVFYLSEY (168 aa)) is large ATPase domain (RuvB-L). Residues Arg-8, Gly-49, Lys-52, Thr-53, Thr-54, 115–117 (EDF), Arg-158, Tyr-168, and Arg-206 each bind ATP. Thr-53 contacts Mg(2+). Residues 169–234 (ETSEIAAIIL…NIKNIFEKIQ (66 aa)) are small ATPAse domain (RuvB-S). The interval 237-312 (DFGLEEQDIN…EFLKNNQLIK (76 aa)) is head domain (RuvB-H). Positions 290 and 295 each coordinate DNA.

It belongs to the RuvB family. In terms of assembly, homohexamer. Forms an RuvA(8)-RuvB(12)-Holliday junction (HJ) complex. HJ DNA is sandwiched between 2 RuvA tetramers; dsDNA enters through RuvA and exits via RuvB. An RuvB hexamer assembles on each DNA strand where it exits the tetramer. Each RuvB hexamer is contacted by two RuvA subunits (via domain III) on 2 adjacent RuvB subunits; this complex drives branch migration. In the full resolvosome a probable DNA-RuvA(4)-RuvB(12)-RuvC(2) complex forms which resolves the HJ.

The protein localises to the cytoplasm. It carries out the reaction ATP + H2O = ADP + phosphate + H(+). Functionally, the RuvA-RuvB-RuvC complex processes Holliday junction (HJ) DNA during genetic recombination and DNA repair, while the RuvA-RuvB complex plays an important role in the rescue of blocked DNA replication forks via replication fork reversal (RFR). RuvA specifically binds to HJ cruciform DNA, conferring on it an open structure. The RuvB hexamer acts as an ATP-dependent pump, pulling dsDNA into and through the RuvAB complex. RuvB forms 2 homohexamers on either side of HJ DNA bound by 1 or 2 RuvA tetramers; 4 subunits per hexamer contact DNA at a time. Coordinated motions by a converter formed by DNA-disengaged RuvB subunits stimulates ATP hydrolysis and nucleotide exchange. Immobilization of the converter enables RuvB to convert the ATP-contained energy into a lever motion, pulling 2 nucleotides of DNA out of the RuvA tetramer per ATP hydrolyzed, thus driving DNA branch migration. The RuvB motors rotate together with the DNA substrate, which together with the progressing nucleotide cycle form the mechanistic basis for DNA recombination by continuous HJ branch migration. Branch migration allows RuvC to scan DNA until it finds its consensus sequence, where it cleaves and resolves cruciform DNA. The protein is Holliday junction branch migration complex subunit RuvB of Ureaplasma urealyticum serovar 10 (strain ATCC 33699 / Western).